The following is a 93-amino-acid chain: UPF0297 protein PEPE_1262 (93 aa).

It belongs to the UPF0297 family.

The chain is UPF0297 protein PEPE_1262 from Pediococcus pentosaceus (strain ATCC 25745 / CCUG 21536 / LMG 10740 / 183-1w).